A 1423-amino-acid chain; its full sequence is Fructan beta-fructosidase (1423 aa).

The first 39 residues, 1–39 (MEEETVCKNWFMRKSGKSWIFGCAVFFVLGLATALPVAA), serve as a signal peptide directing secretion. The tract at residues 44–161 (QTTAADTAVT…TNLEDMSHDT (118 aa)) is disordered. Residues 69-126 (AVTETTQSEGTASKQLTTPAVADQTTEPTDNEPISSSDGASSPYQVTDTTEPQQTLTP) are compositionally biased toward polar residues. Substrate is bound by residues 455–458 (WAND), Gln474, 513–514 (FS), 581–582 (RD), and Asp783. Asp458 is an active-site residue. Residues 867-871 (ASVEV) form an involved in binding of sugars with beta-(2,6) linkages or binding of molecular weight fructans region. Residues 924-1002 (PVAMNTTTAK…SKENPSLSKT (79 aa)) form the BIG2 domain. Residues 1368–1385 (DVNSVQQTEPSVMSSSPK) show a composition bias toward polar residues. The interval 1368-1394 (DVNSVQQTEPSVMSSSPKATLPDTGDH) is disordered. The LPXTG sorting signal signature appears at 1388–1392 (LPDTG). At Thr1391 the chain carries Pentaglycyl murein peptidoglycan amidated threonine. Residues 1392 to 1423 (GDHKTDLSQLGVLAMIGSFLVEIAGYFKKRKD) constitute a propeptide, removed by sortase.

This sequence belongs to the glycosyl hydrolase 32 family.

The protein resides in the secreted. It is found in the cell wall. It catalyses the reaction Hydrolysis of terminal, non-reducing (2-&gt;1)- and (2-&gt;6)-linked beta-D-fructofuranose residues in fructans.. Its function is as follows. This protein is a fructanase enzyme which degrades levans and inulins to fructose and also cleaves sucrose into glucose and fructose and can therefore function as an extracellular invertase. The polypeptide is Fructan beta-fructosidase (fruA) (Streptococcus mutans serotype c (strain ATCC 700610 / UA159)).